The sequence spans 440 residues: Proline--tRNA ligase (440 aa).

It belongs to the class-II aminoacyl-tRNA synthetase family. ProS type 2 subfamily. As to quaternary structure, homodimer.

It is found in the cytoplasm. It catalyses the reaction tRNA(Pro) + L-proline + ATP = L-prolyl-tRNA(Pro) + AMP + diphosphate. In terms of biological role, catalyzes the attachment of proline to tRNA(Pro) in a two-step reaction: proline is first activated by ATP to form Pro-AMP and then transferred to the acceptor end of tRNA(Pro). This Agrobacterium fabrum (strain C58 / ATCC 33970) (Agrobacterium tumefaciens (strain C58)) protein is Proline--tRNA ligase.